We begin with the raw amino-acid sequence, 284 residues long: Nucleotide-binding protein NGK_0463 (284 aa).

8–15 contacts ATP; it reads GLSGSGKS. Residue 58–61 coordinates GTP; it reads DVRS.

This sequence belongs to the RapZ-like family.

Functionally, displays ATPase and GTPase activities. In Neisseria gonorrhoeae (strain NCCP11945), this protein is Nucleotide-binding protein NGK_0463.